We begin with the raw amino-acid sequence, 158 residues long: Cyclic pyranopterin monophosphate synthase (158 aa).

Substrate contacts are provided by residues 74–76 (MCH) and 112–113 (ME). The active site involves Asp-127.

Belongs to the MoaC family. As to quaternary structure, homohexamer; trimer of dimers.

It catalyses the reaction (8S)-3',8-cyclo-7,8-dihydroguanosine 5'-triphosphate = cyclic pyranopterin phosphate + diphosphate. The protein operates within cofactor biosynthesis; molybdopterin biosynthesis. Catalyzes the conversion of (8S)-3',8-cyclo-7,8-dihydroguanosine 5'-triphosphate to cyclic pyranopterin monophosphate (cPMP). The polypeptide is Cyclic pyranopterin monophosphate synthase (Helicobacter pylori (strain Shi470)).